We begin with the raw amino-acid sequence, 72 residues long: Potassium channel toxin kappa-KTx 5.1 (72 aa).

The N-terminal stretch at Met-1–Cys-23 is a signal peptide. The propeptide occupies Asp-24 to Val-43. 2 disulfides stabilise this stretch: Cys-47–Cys-64 and Cys-51–Cys-60. The residue at position 70 (His-70) is a Histidine amide.

This sequence belongs to the short scorpion toxin superfamily. Potassium channel inhibitor kappa-KTx family. Kappa-KTx 5 subfamily. Expressed by the venom gland.

It is found in the secreted. Its function is as follows. Weak blocker of potassium channels Kv1.1/KCNA1 (IC(50)=578.5 nM-9.9 uM) and Kv1.6/KCNA6 (~60% block at 30 uM of toxin). Acts by binding to the pore and occluding it. Has a voltage-dependent mode of action, which can be explained by a high content of basic residues causing repulsions at higher membrane voltages. Shows a weak interaction with muscle-type nicotinic acetylcholine receptors (nAChR), since it inhibits alpha-bungarotoxin binding to muscle-type nAChR from T.californica (IC(50)=1.4 uM). This suggests it probably weakly inhibits muscle nAChR. The mode of binding to potassium channels of this toxin differs from its homologs (including HefuTx1), since it lacks the key aromatic residue of the functional dyad. In contrast, its functionally important site is composed of a number of basic residues. The chain is Potassium channel toxin kappa-KTx 5.1 from Heterometrus laoticus (Thai giant scorpion).